The primary structure comprises 113 residues: Large ribosomal subunit protein bL19 (113 aa).

It belongs to the bacterial ribosomal protein bL19 family.

Its function is as follows. This protein is located at the 30S-50S ribosomal subunit interface and may play a role in the structure and function of the aminoacyl-tRNA binding site. The sequence is that of Large ribosomal subunit protein bL19 from Mycobacteroides abscessus (strain ATCC 19977 / DSM 44196 / CCUG 20993 / CIP 104536 / JCM 13569 / NCTC 13031 / TMC 1543 / L948) (Mycobacterium abscessus).